Consider the following 557-residue polypeptide: 2-succinyl-5-enolpyruvyl-6-hydroxy-3-cyclohexene-1-carboxylate synthase (557 aa).

Belongs to the TPP enzyme family. MenD subfamily. In terms of assembly, homodimer. It depends on Mg(2+) as a cofactor. Mn(2+) serves as cofactor. The cofactor is thiamine diphosphate.

It carries out the reaction isochorismate + 2-oxoglutarate + H(+) = 5-enolpyruvoyl-6-hydroxy-2-succinyl-cyclohex-3-ene-1-carboxylate + CO2. It participates in quinol/quinone metabolism; 1,4-dihydroxy-2-naphthoate biosynthesis; 1,4-dihydroxy-2-naphthoate from chorismate: step 2/7. The protein operates within quinol/quinone metabolism; menaquinone biosynthesis. Catalyzes the thiamine diphosphate-dependent decarboxylation of 2-oxoglutarate and the subsequent addition of the resulting succinic semialdehyde-thiamine pyrophosphate anion to isochorismate to yield 2-succinyl-5-enolpyruvyl-6-hydroxy-3-cyclohexene-1-carboxylate (SEPHCHC). This is 2-succinyl-5-enolpyruvyl-6-hydroxy-3-cyclohexene-1-carboxylate synthase from Staphylococcus aureus (strain MSSA476).